A 787-amino-acid polypeptide reads, in one-letter code: Filamentous growth regulator 27 (787 aa).

A disordered region spans residues 1–22 (MSAPIVETKKASKRRIRRIPDD). A DNA-binding region (zn(2)-C6 fungal-type) is located at residues 31-57 (CDNCKKRKFKCSGEKPCFECSKKGHDC). Residues 69-97 (GERMAKLKQKKDNNEKQRELVNEQIAQSS) are a coiled coil. Disordered stretches follow at residues 120–140 (SSHS…SSIP) and 200–221 (RHKS…KGGI). A compositionally biased stretch (polar residues) spans 209-221 (DNNTNNVPKKGGI).

Its subcellular location is the nucleus. Its function is as follows. Transcription factor involved in yeast cell adherence to silicone substrate, filamentous growth, and biofilm formation. The sequence is that of Filamentous growth regulator 27 (FGR27) from Candida albicans (strain SC5314 / ATCC MYA-2876) (Yeast).